A 91-amino-acid chain; its full sequence is ATP synthase subunit c 1 (91 aa).

2 helical membrane passes run 4-24 (FTMCVFGAAIGMAIGTLGTAI) and 53-73 (IGLAMIESLAIYALVVCLIIL).

Belongs to the ATPase C chain family. As to quaternary structure, F-type ATPases have 2 components, F(1) - the catalytic core - and F(0) - the membrane proton channel. F(1) has five subunits: alpha(3), beta(3), gamma(1), delta(1), epsilon(1). F(0) has three main subunits: a(1), b(2) and c(10-14). The alpha and beta chains form an alternating ring which encloses part of the gamma chain. F(1) is attached to F(0) by a central stalk formed by the gamma and epsilon chains, while a peripheral stalk is formed by the delta and b chains.

Its subcellular location is the cell inner membrane. Its function is as follows. F(1)F(0) ATP synthase produces ATP from ADP in the presence of a proton or sodium gradient. F-type ATPases consist of two structural domains, F(1) containing the extramembraneous catalytic core and F(0) containing the membrane proton channel, linked together by a central stalk and a peripheral stalk. During catalysis, ATP synthesis in the catalytic domain of F(1) is coupled via a rotary mechanism of the central stalk subunits to proton translocation. Functionally, key component of the F(0) channel; it plays a direct role in translocation across the membrane. A homomeric c-ring of between 10-14 subunits forms the central stalk rotor element with the F(1) delta and epsilon subunits. The sequence is that of ATP synthase subunit c 1 from Pelobacter propionicus (strain DSM 2379 / NBRC 103807 / OttBd1).